The primary structure comprises 562 residues: Formate--tetrahydrofolate ligase (562 aa).

ATP is bound at residue 71–78; that stretch reads TPAGEGKS.

Belongs to the formate--tetrahydrofolate ligase family.

It catalyses the reaction (6S)-5,6,7,8-tetrahydrofolate + formate + ATP = (6R)-10-formyltetrahydrofolate + ADP + phosphate. Its pathway is one-carbon metabolism; tetrahydrofolate interconversion. The sequence is that of Formate--tetrahydrofolate ligase from Bacillus cereus (strain ATCC 10987 / NRS 248).